Reading from the N-terminus, the 402-residue chain is Arginine deiminase (402 aa).

Cys-392 acts as the Amidino-cysteine intermediate in catalysis.

It belongs to the arginine deiminase family.

The protein localises to the cytoplasm. It catalyses the reaction L-arginine + H2O = L-citrulline + NH4(+). It participates in amino-acid degradation; L-arginine degradation via ADI pathway; carbamoyl phosphate from L-arginine: step 1/2. This is Arginine deiminase (arcA) from Mycobacterium bovis (strain ATCC BAA-935 / AF2122/97).